A 417-amino-acid chain; its full sequence is Biofilm dispersion protein BdlA (417 aa).

The PAS 1 domain maps to 1–66; it reads MAALDRSMAR…RRFWERLRRG (66 aa). In terms of domain architecture, PAC 1 spans 67–114; the sequence is EHFSGRCKRITREGRPLWLEATYNPVRDGQGRLLKVVKYASDIDAIVH. The region spanning 115 to 188 is the PAS 2 domain; sequence QEHEMQSKLD…ADLWRRLNRG (74 aa). Residues 191–241 form the PAC 2 domain; sequence VTGQFRRVHRNGQPVWLEASYNPVYDADGKLYKVVKFASDVSDRMRRYQAE. The 176-residue stretch at 242–417 folds into the Methyl-accepting transducer domain; that stretch reads ADNAHQAHTL…QFSRTLNADL (176 aa).

Essential for biofilm dispersion by sensing environmental cues. May be involved in sensing and transducing signals within cells, resulting in the modulation of c-di-GMP levels, swimming motility and adhesiveness of the bacterial cell surface. The polypeptide is Biofilm dispersion protein BdlA (bdlA) (Pseudomonas aeruginosa (strain ATCC 15692 / DSM 22644 / CIP 104116 / JCM 14847 / LMG 12228 / 1C / PRS 101 / PAO1)).